A 150-amino-acid polypeptide reads, in one-letter code: Cytochrome c oxidase subunit 5A, mitochondrial (150 aa).

A mitochondrion-targeting transit peptide spans 1 to 41 (MLGAALRRCAVAAAARAGPRGLLHSAPTPGPAAAIQSVRCY). Residues 2 to 17 (LGAALRRCAVAAAARA) carry the SIFI-degron motif. Residues Lys87 and Lys113 each carry the N6-acetyllysine modification. A Phosphothreonine modification is found at Thr141.

It belongs to the cytochrome c oxidase subunit 5A family. As to quaternary structure, component of the cytochrome c oxidase (complex IV, CIV), a multisubunit enzyme composed of 14 subunits. The complex is composed of a catalytic core of 3 subunits MT-CO1, MT-CO2 and MT-CO3, encoded in the mitochondrial DNA, and 11 supernumerary subunits COX4I, COX5A, COX5B, COX6A, COX6B, COX6C, COX7A, COX7B, COX7C, COX8 and NDUFA4, which are encoded in the nuclear genome. The complex exists as a monomer or a dimer and forms supercomplexes (SCs) in the inner mitochondrial membrane with NADH-ubiquinone oxidoreductase (complex I, CI) and ubiquinol-cytochrome c oxidoreductase (cytochrome b-c1 complex, complex III, CIII), resulting in different assemblies (supercomplex SCI(1)III(2)IV(1) and megacomplex MCI(2)III(2)IV(2)). Interacts with AFG1L. Interacts with RAB5IF. In response to mitochondrial stress, the precursor protein is ubiquitinated by the SIFI complex in the cytoplasm before mitochondrial import, leading to its degradation. Within the SIFI complex, UBR4 initiates ubiquitin chain that are further elongated or branched by KCMF1.

It is found in the mitochondrion inner membrane. It functions in the pathway energy metabolism; oxidative phosphorylation. Its function is as follows. Component of the cytochrome c oxidase, the last enzyme in the mitochondrial electron transport chain which drives oxidative phosphorylation. The respiratory chain contains 3 multisubunit complexes succinate dehydrogenase (complex II, CII), ubiquinol-cytochrome c oxidoreductase (cytochrome b-c1 complex, complex III, CIII) and cytochrome c oxidase (complex IV, CIV), that cooperate to transfer electrons derived from NADH and succinate to molecular oxygen, creating an electrochemical gradient over the inner membrane that drives transmembrane transport and the ATP synthase. Cytochrome c oxidase is the component of the respiratory chain that catalyzes the reduction of oxygen to water. Electrons originating from reduced cytochrome c in the intermembrane space (IMS) are transferred via the dinuclear copper A center (CU(A)) of subunit 2 and heme A of subunit 1 to the active site in subunit 1, a binuclear center (BNC) formed by heme A3 and copper B (CU(B)). The BNC reduces molecular oxygen to 2 water molecules using 4 electrons from cytochrome c in the IMS and 4 protons from the mitochondrial matrix. The protein is Cytochrome c oxidase subunit 5A, mitochondrial (COX5A) of Plecturocebus donacophilus (Bolivian gray titi monkey).